The sequence spans 426 residues: Tyrosine-protein phosphatase non-receptor type 20 (426 aa).

The segment covering 1–10 (MSSPRKVRGK) has biased composition (basic residues). A disordered region spans residues 1–58 (MSSPRKVRGKTGRDNDEEEGNSGNLNLRNSLPSSSQKMTPTKPIFGNKMNSENVKPSH). Over residues 21 to 35 (NSGNLNLRNSLPSSS) the composition is skewed to low complexity. S76 bears the Phosphoserine mark. Over residues 95 to 117 (NSMDSETAGPSKTVSPVLSGSSR) the composition is skewed to polar residues. The tract at residues 95–124 (NSMDSETAGPSKTVSPVLSGSSRLSKDTET) is disordered. S127 is modified (phosphoserine). Residues 165-418 (IIREFLELEQ…QFCYEIVLEV (254 aa)) enclose the Tyrosine-protein phosphatase domain. Substrate contacts are provided by residues D329, 359–365 (CSAGVGR), and Q403. The active-site Phosphocysteine intermediate is C359.

The protein belongs to the protein-tyrosine phosphatase family. Non-receptor class subfamily. Testis-specific. Specifically expressed in testicular germ cells that undergo meiosis (at protein level).

The protein resides in the nucleus. Its subcellular location is the cytoplasm. The protein localises to the cytoskeleton. It is found in the microtubule organizing center. It localises to the centrosome. The enzyme catalyses O-phospho-L-tyrosyl-[protein] + H2O = L-tyrosyl-[protein] + phosphate. Tyrosine-protein phosphatase targeted to sites of actin polymerization in response of varied extracellular stimuli. Has tyrosine phosphatase activity towards various tyrosyl phosphorylated substrates. This Mus musculus (Mouse) protein is Tyrosine-protein phosphatase non-receptor type 20 (Ptpn20).